The primary structure comprises 369 residues: Protein RecA (369 aa).

77–84 (GPESSGKT) serves as a coordination point for ATP.

The protein belongs to the RecA family.

The protein resides in the cytoplasm. Can catalyze the hydrolysis of ATP in the presence of single-stranded DNA, the ATP-dependent uptake of single-stranded DNA by duplex DNA, and the ATP-dependent hybridization of homologous single-stranded DNAs. It interacts with LexA causing its activation and leading to its autocatalytic cleavage. The chain is Protein RecA from Corynebacterium pseudotuberculosis (strain C231).